The sequence spans 360 residues: 1-aminocyclopropane-1-carboxylate oxidase homolog 6 (360 aa).

Positions 208–309 (KGLLLLCHYY…ISVASFFSTS (102 aa)) constitute a Fe2OG dioxygenase domain. Residues H232, D234, and H288 each coordinate Fe cation. 2-oxoglutarate is bound at residue R299.

This sequence belongs to the iron/ascorbate-dependent oxidoreductase family. Requires Fe(2+) as cofactor. Constitutively expressed in leaves and blades.

The chain is 1-aminocyclopropane-1-carboxylate oxidase homolog 6 from Arabidopsis thaliana (Mouse-ear cress).